The sequence spans 634 residues: Ankyrin repeat protein OPG025 (634 aa).

ANK repeat units lie at residues D36–I69, N70–S100, N103–S134, M175–Y211, I307–R337, and H412–I441.

Belongs to the orthopoxvirus OPG025 family. Interacts with components of host SCF complex CUL1 and SKP1 and components of the cullin deneddylation/COP9 signalosome complex subunits COPS7A and COPS7B.

Plays a role in the inhibition of host immune repsonse by counteracting the action of interferons on early events in the viral replication cycle. This Vaccinia virus (strain Western Reserve) (VACV) protein is Ankyrin repeat protein OPG025 (OPG035).